Here is a 347-residue protein sequence, read N- to C-terminus: Transcription factor JunB (347 aa).

Residues Lys4, Lys33, and Lys36 each participate in a glycyl lysine isopeptide (Lys-Gly) (interchain with G-Cter in SUMO2) cross-link. The tract at residues 50-77 (LKAPGARGPGPEGNGGGSYFSSQGSDTG) is disordered. The segment covering 56 to 67 (RGPGPEGNGGGS) has biased composition (gly residues). The span at 68 to 77 (YFSSQGSDTG) shows a compositional bias: polar residues. A Glycyl lysine isopeptide (Lys-Gly) (interchain with G-Cter in SUMO2) cross-link involves residue Lys81. Phosphothreonine is present on residues Thr102 and Thr104. A Phosphoserine modification is found at Ser117. A Glycyl lysine isopeptide (Lys-Gly) (interchain with G-Cter in SUMO2) cross-link involves residue Lys141. Lys240 bears the N6-acetyllysine; alternate mark. A Glycyl lysine isopeptide (Lys-Gly) (interchain with G-Cter in SUMO1); alternate cross-link involves residue Lys240. A Glycyl lysine isopeptide (Lys-Gly) (interchain with G-Cter in SUMO2); alternate cross-link involves residue Lys240. The span at 241–253 (EEPQTVPEARSRD) shows a compositional bias: basic and acidic residues. Residues 241-260 (EEPQTVPEARSRDATPPVSP) are disordered. At Ser251 the chain carries Phosphoserine. At Thr255 the chain carries Phosphothreonine. Residue Ser259 is modified to Phosphoserine. Positions 268-295 (RIKVERKRLRNRLAATKCRKRKLERIAR) are basic motif. Residues 268-331 (RIKVERKRLR…AQLKQKVMTH (64 aa)) form the bZIP domain. Positions 296 to 324 (LEDKVKTLKAENAGLSSTAGLLREQVAQL) are leucine-zipper. Lys343 is covalently cross-linked (Glycyl lysine isopeptide (Lys-Gly) (interchain with G-Cter in SUMO2)).

This sequence belongs to the bZIP family. Jun subfamily. Binds DNA as a homodimer or as a heterodimer with another member of the Jun/Fos family. Component of an AP-1 transcription factor complex composed of JUN-FOS heterodimers. As part of the AP-1 transcription factor complex, forms heterodimers with FOSB, thereby binding to the AP-1 consensus sequence and stimulating transcription. Interacts with ITCH (via its WW domains). In terms of processing, ubiquitinated by ITCH, leading to its degradation.

It localises to the nucleus. Transcription factor involved in regulating gene activity following the primary growth factor response. Binds to the DNA sequence 5'-TGA[GC]TCA-3'. Heterodimerizes with proteins of the FOS family to form an AP-1 transcription complex, thereby enhancing its DNA binding activity to an AP-1 consensus sequence and its transcriptional activity. This chain is Transcription factor JunB (JUNB), found in Bos taurus (Bovine).